Reading from the N-terminus, the 338-residue chain is Glyceraldehyde-3-phosphate dehydrogenase (338 aa).

NAD(+)-binding positions include 11–12 (TI) and Gly109. 138 to 140 (SCN) lines the D-glyceraldehyde 3-phosphate pocket. Cys139 (nucleophile) is an active-site residue. Arg167 provides a ligand contact to NAD(+). D-glyceraldehyde 3-phosphate contacts are provided by residues Thr169 and 192 to 193 (HA). Position 299 (Gln299) interacts with NAD(+).

This sequence belongs to the glyceraldehyde-3-phosphate dehydrogenase family. In terms of assembly, homotetramer.

Its subcellular location is the cytoplasm. It catalyses the reaction D-glyceraldehyde 3-phosphate + phosphate + NADP(+) = (2R)-3-phospho-glyceroyl phosphate + NADPH + H(+). The enzyme catalyses D-glyceraldehyde 3-phosphate + phosphate + NAD(+) = (2R)-3-phospho-glyceroyl phosphate + NADH + H(+). It functions in the pathway carbohydrate degradation; glycolysis; pyruvate from D-glyceraldehyde 3-phosphate: step 1/5. The protein is Glyceraldehyde-3-phosphate dehydrogenase of Thermoplasma volcanium (strain ATCC 51530 / DSM 4299 / JCM 9571 / NBRC 15438 / GSS1).